The sequence spans 137 residues: Large ribosomal subunit protein uL16 (137 aa).

This sequence belongs to the universal ribosomal protein uL16 family. As to quaternary structure, part of the 50S ribosomal subunit.

In terms of biological role, binds 23S rRNA and is also seen to make contacts with the A and possibly P site tRNAs. The chain is Large ribosomal subunit protein uL16 from Lactococcus lactis subsp. cremoris (strain SK11).